The primary structure comprises 438 residues: Glutamyl-tRNA reductase (438 aa).

Substrate is bound by residues 55 to 58, Ser118, 123 to 125, and Gln129; these read TCNR and ETQ. Cys56 acts as the Nucleophile in catalysis. 198 to 203 is a binding site for NADP(+); sequence GAGDMI.

This sequence belongs to the glutamyl-tRNA reductase family. Homodimer.

The enzyme catalyses (S)-4-amino-5-oxopentanoate + tRNA(Glu) + NADP(+) = L-glutamyl-tRNA(Glu) + NADPH + H(+). It participates in porphyrin-containing compound metabolism; protoporphyrin-IX biosynthesis; 5-aminolevulinate from L-glutamyl-tRNA(Glu): step 1/2. Catalyzes the NADPH-dependent reduction of glutamyl-tRNA(Glu) to glutamate 1-semialdehyde (GSA). The protein is Glutamyl-tRNA reductase of Polynucleobacter asymbioticus (strain DSM 18221 / CIP 109841 / QLW-P1DMWA-1) (Polynucleobacter necessarius subsp. asymbioticus).